A 298-amino-acid chain; its full sequence is MPFVEEEFEILKPTKALFFVRDVLKCSLKEAQRHLDKQRLKQNQQAVRKSQIIQGVVRLIHFKPNEKTQALVFETKDFGVFDKPHQVYTHPKGYFYHESLLDCIQSHFGKNAHPAHRLDYETSGLVLAGKTLQSVKDLKALFMQKKVKKTYLALAHGLVEKSMKIDKPILTPQNIQKDLHIRSKISPLGKQSITLVEPLSYNPFLDISLLKITPLTGRTHQIRLHLSSVDHRIVGEGLYGVADENAREYLQLKRENNAPLLMLHAASLEFEFKGAIYKIASPMPERFMPFLKDLSFFY.

The active site involves D119.

This sequence belongs to the pseudouridine synthase RluA family.

It carries out the reaction a uridine in RNA = a pseudouridine in RNA. This is an uncharacterized protein from Helicobacter pylori (strain ATCC 700392 / 26695) (Campylobacter pylori).